Here is a 350-residue protein sequence, read N- to C-terminus: Hydroxymethylglutaryl-CoA synthase (350 aa).

Positions 33 and 34 each coordinate (3S)-3-hydroxy-3-methylglutaryl-CoA. The active-site Proton donor/acceptor is E85. Positions 117 and 158 each coordinate (3S)-3-hydroxy-3-methylglutaryl-CoA. The active-site Acyl-thioester intermediate is C117. R204 serves as a coordination point for CoA. Residues T206 and H239 each contribute to the (3S)-3-hydroxy-3-methylglutaryl-CoA site. H239 serves as the catalytic Proton donor/acceptor. K244 contributes to the CoA binding site. (3S)-3-hydroxy-3-methylglutaryl-CoA is bound by residues K248, N271, and S301.

The protein belongs to the thiolase-like superfamily. Archaeal HMG-CoA synthase family. Interacts with acetoacetyl-CoA thiolase that catalyzes the precedent step in the pathway and with a DUF35 protein. The acetoacetyl-CoA thiolase/HMG-CoA synthase complex channels the intermediate via a fused CoA-binding site, which allows for efficient coupling of the endergonic thiolase reaction with the exergonic HMGCS reaction.

The catalysed reaction is acetoacetyl-CoA + acetyl-CoA + H2O = (3S)-3-hydroxy-3-methylglutaryl-CoA + CoA + H(+). Its pathway is metabolic intermediate biosynthesis; (R)-mevalonate biosynthesis; (R)-mevalonate from acetyl-CoA: step 2/3. Functionally, catalyzes the condensation of acetyl-CoA with acetoacetyl-CoA to form 3-hydroxy-3-methylglutaryl-CoA (HMG-CoA). Functions in the mevalonate (MVA) pathway leading to isopentenyl diphosphate (IPP), a key precursor for the biosynthesis of isoprenoid compounds that are building blocks of archaeal membrane lipids. The sequence is that of Hydroxymethylglutaryl-CoA synthase from Methanopyrus kandleri (strain AV19 / DSM 6324 / JCM 9639 / NBRC 100938).